Reading from the N-terminus, the 148-residue chain is uncharacterized protein (148 aa).

Residues 1-21 (MLQNYAIVLGMAVAVAIWYFF) form a helical membrane-spanning segment. The interval 27–61 (APPGPNPPKPDPPKPDPPKMHMPKKKPHWMDPHLT) is disordered.

The protein localises to the host membrane. This is an uncharacterized protein from Frog virus 3 (isolate Goorha) (FV-3).